We begin with the raw amino-acid sequence, 1059 residues long: Disks large-associated protein 2 (1059 aa).

Disordered stretches follow at residues 31 to 54 and 245 to 311; these read GEPEEEEGGDLAQPGLSFPGPAEE and KSHS…SDST. Residues 245–261 are compositionally biased toward polar residues; that stretch reads KSHSLEGSSKSNINGTK. Residues 262-271 show a composition bias toward basic and acidic residues; it reads SDSRVDDHHQ. The span at 272-285 shows a compositional bias: basic residues; it reads SHLSKHSKRSKSKE. 4 positions are modified to phosphoserine: Ser302, Ser308, Ser390, and Ser456. Residues 613 to 669 are disordered; the sequence is YKKTPPPVPPRTTSKPLISVTAQSSTESTQDAYQDSRAQRMSPWPQDSRGGLYNSMD. Positions 632 to 645 are enriched in polar residues; it reads VTAQSSTESTQDAY. Phosphoserine occurs at positions 667, 670, 673, and 720. The segment at 723-756 is disordered; sequence VQDSEFPDHQPYPRSDVETATDSDTESRGLREYH. Thr743 bears the Phosphothreonine mark. Ser745 bears the Phosphoserine mark. The segment covering 747–756 has biased composition (basic and acidic residues); that stretch reads TESRGLREYH. Phosphoserine occurs at positions 776, 811, 983, and 1012. Residues 985–1025 are disordered; that stretch reads ERKEERKIPPPIPKKPPKGKFPITREKSLDLPDRQRQEARR. Over residues 1007–1025 the composition is skewed to basic and acidic residues; it reads ITREKSLDLPDRQRQEARR.

The protein belongs to the SAPAP family. Interacts with DLG4/PSD-95. As to expression, expressed in various brain areas.

Its subcellular location is the cell membrane. It localises to the postsynaptic density. The protein localises to the synapse. In terms of biological role, may play a role in the molecular organization of synapses and neuronal cell signaling. Could be an adapter protein linking ion channel to the subsynaptic cytoskeleton. May induce enrichment of PSD-95/SAP90 at the plasma membrane. The sequence is that of Disks large-associated protein 2 from Mus musculus (Mouse).